A 206-amino-acid polypeptide reads, in one-letter code: uncharacterized protein (206 aa).

This is an uncharacterized protein from Methanocaldococcus jannaschii (strain ATCC 43067 / DSM 2661 / JAL-1 / JCM 10045 / NBRC 100440) (Methanococcus jannaschii).